A 52-amino-acid polypeptide reads, in one-letter code: Large ribosomal subunit protein bL33 (52 aa).

This sequence belongs to the bacterial ribosomal protein bL33 family.

This chain is Large ribosomal subunit protein bL33, found in Chlamydia trachomatis serovar L2 (strain ATCC VR-902B / DSM 19102 / 434/Bu).